The chain runs to 502 residues: 4-hydroxy-3-methylbut-2-enyl diphosphate reductase, chloroplastic (502 aa).

Residues 1 to 48 constitute a chloroplast transit peptide; sequence MQVLPQTRVQGVPSGRNLSCSKAVGGTPLRALTRDVVRPARSVNVHVV. [4Fe-4S] cluster is bound at residue cysteine 140. Histidine 170 lines the (2E)-4-hydroxy-3-methylbut-2-enyl diphosphate pocket. Cysteine 232 contacts [4Fe-4S] cluster. Residue histidine 260 coordinates (2E)-4-hydroxy-3-methylbut-2-enyl diphosphate. The active-site Proton donor is the glutamate 262. Residue threonine 325 coordinates (2E)-4-hydroxy-3-methylbut-2-enyl diphosphate. Cysteine 363 lines the [4Fe-4S] cluster pocket. Residues 398–400 and serine 461 each bind (2E)-4-hydroxy-3-methylbut-2-enyl diphosphate; that span reads SSN.

It belongs to the IspH family. Homodimer. Requires [4Fe-4S] cluster as cofactor.

The protein localises to the plastid. The protein resides in the chloroplast stroma. The enzyme catalyses dimethylallyl diphosphate + 2 oxidized [2Fe-2S]-[ferredoxin] + H2O = (2E)-4-hydroxy-3-methylbut-2-enyl diphosphate + 2 reduced [2Fe-2S]-[ferredoxin] + 2 H(+). It carries out the reaction isopentenyl diphosphate + 2 oxidized [2Fe-2S]-[ferredoxin] + H2O = (2E)-4-hydroxy-3-methylbut-2-enyl diphosphate + 2 reduced [2Fe-2S]-[ferredoxin] + 2 H(+). The protein operates within isoprenoid biosynthesis; dimethylallyl diphosphate biosynthesis; dimethylallyl diphosphate from (2E)-4-hydroxy-3-methylbutenyl diphosphate: step 1/1. It functions in the pathway isoprenoid biosynthesis; isopentenyl diphosphate biosynthesis via DXP pathway; isopentenyl diphosphate from 1-deoxy-D-xylulose 5-phosphate: step 6/6. Its function is as follows. Enzyme of the plastid non-mevalonate pathway for isoprenoid biosynthesis that converts 1-hydroxy-2-methyl-2-(E)-butenyl 4-diphosphate into isopentenyl diphosphate (IPP) and dimethylallyl diphosphate (DMAPP). This Botryococcus braunii (Green alga) protein is 4-hydroxy-3-methylbut-2-enyl diphosphate reductase, chloroplastic.